The following is a 361-amino-acid chain: Aromatic amino acid aminotransferase (361 aa).

K221 is subject to N6-(pyridoxal phosphate)lysine.

It belongs to the class-II pyridoxal-phosphate-dependent aminotransferase family. Homodimer. Requires pyridoxal 5'-phosphate as cofactor.

It catalyses the reaction an aromatic L-alpha-amino acid + 2-oxoglutarate = an aromatic oxo-acid + L-glutamate. In terms of biological role, aminotransferase that catalyzes the conversion of aromatic amino acids and 2-oxoglutarate into corresponding aromatic oxo acids and L-glutamate. The sequence is that of Aromatic amino acid aminotransferase from Mycobacterium ulcerans (strain Agy99).